Consider the following 822-residue polypeptide: Glycerol-3-phosphate acyltransferase (822 aa).

Positions 306–311 match the HXXXXD motif motif; that stretch reads CHRSHM. The segment at 803 to 822 is disordered; it reads ASSSAEMEAESQAVEETTQE.

The protein belongs to the GPAT/DAPAT family.

It is found in the cell inner membrane. It carries out the reaction sn-glycerol 3-phosphate + an acyl-CoA = a 1-acyl-sn-glycero-3-phosphate + CoA. Its pathway is phospholipid metabolism; CDP-diacylglycerol biosynthesis; CDP-diacylglycerol from sn-glycerol 3-phosphate: step 1/3. The sequence is that of Glycerol-3-phosphate acyltransferase from Pectobacterium carotovorum subsp. carotovorum (strain PC1).